Consider the following 192-residue polypeptide: Probable nicotinate-nucleotide adenylyltransferase (192 aa).

Belongs to the NadD family.

It carries out the reaction nicotinate beta-D-ribonucleotide + ATP + H(+) = deamido-NAD(+) + diphosphate. The protein operates within cofactor biosynthesis; NAD(+) biosynthesis; deamido-NAD(+) from nicotinate D-ribonucleotide: step 1/1. Functionally, catalyzes the reversible adenylation of nicotinate mononucleotide (NaMN) to nicotinic acid adenine dinucleotide (NaAD). This Rhizobium etli (strain CIAT 652) protein is Probable nicotinate-nucleotide adenylyltransferase.